A 591-amino-acid polypeptide reads, in one-letter code: Laccase (591 aa).

A signal peptide spans 1 to 20 (MPSFFRALFSGLIASQLSWA). 2 consecutive Plastocyanin-like domains span residues 66–189 (VRQY…IQID) and 198–356 (IDLG…HPTN). N-linked (GlcNAc...) asparagine glycosylation is present at N121. Cu cation is bound by residues H126, H128, H171, and H173. Cystine bridges form between C147–C571 and C332–C366. N234, N242, N265, and N323 each carry an N-linked (GlcNAc...) asparagine glycan. Residues N407 and N425 are each glycosylated (N-linked (GlcNAc...) asparagine). The Plastocyanin-like 3 domain maps to 416–551 (GHPITQYVIN…AGLGNTFLEQ (136 aa)). 7 residues coordinate Cu cation: H463, H466, H468, H533, C534, H535, and H539.

This sequence belongs to the multicopper oxidase family. Requires Cu cation as cofactor.

It localises to the secreted. It catalyses the reaction 4 hydroquinone + O2 = 4 benzosemiquinone + 2 H2O. Lignin degradation and detoxification of lignin-derived products. The sequence is that of Laccase (LAC-1) from Cryphonectria parasitica (Chestnut blight fungus).